Here is a 281-residue protein sequence, read N- to C-terminus: Large ribosomal subunit protein uL2 (281 aa).

Disordered stretches follow at residues methionine 1–lysine 23 and arginine 224–lysine 281. The span at glycine 12–lysine 23 shows a compositional bias: polar residues. Positions lysine 261–lysine 281 are enriched in basic residues.

This sequence belongs to the universal ribosomal protein uL2 family. Part of the 50S ribosomal subunit. Forms a bridge to the 30S subunit in the 70S ribosome.

Functionally, one of the primary rRNA binding proteins. Required for association of the 30S and 50S subunits to form the 70S ribosome, for tRNA binding and peptide bond formation. It has been suggested to have peptidyltransferase activity; this is somewhat controversial. Makes several contacts with the 16S rRNA in the 70S ribosome. This chain is Large ribosomal subunit protein uL2, found in Mycoplasmopsis agalactiae (strain NCTC 10123 / CIP 59.7 / PG2) (Mycoplasma agalactiae).